A 148-amino-acid polypeptide reads, in one-letter code: MLSNAKLLLSLAMASTALGLVSNSSSSVIVVPSSDATIAGNDTATPAPEPSSAAPIFYNSTATATQYEVVSEFTTYCPEPTTFVTNGATFTVTAPTTLTITNCPCTIEKPTSETSVSSTHDVETNSNAANARAIPGALGLAGAVMMLL.

Positions 1–19 (MLSNAKLLLSLAMASTALG) are cleaved as a signal peptide. N-linked (GlcNAc...) asparagine glycans are attached at residues N41 and N59. Residue N127 is the site of GPI-anchor amidated asparagine attachment. The propeptide at 128–148 (AANARAIPGALGLAGAVMMLL) is removed in mature form.

Belongs to the SED1 family. The GPI-anchor is attached to the protein in the endoplasmic reticulum and serves to target the protein to the cell surface. There, the glucosamine-inositol phospholipid moiety is cleaved off and the GPI-modified mannoprotein is covalently attached via its lipidless GPI glycan remnant to the 1,6-beta-glucan of the outer cell wall layer.

Its subcellular location is the secreted. The protein localises to the cell wall. It is found in the membrane. In terms of biological role, cell wall protein that plays a role in adaptation and resistance to cell wall stress. This is an uncharacterized protein from Saccharomyces cerevisiae (strain ATCC 204508 / S288c) (Baker's yeast).